Reading from the N-terminus, the 277-residue chain is MTTTVAVVGATGRMGQLISQIVEASTEFELVASLDSKDELSDMLGADIAVDVTLPAVSQGVVEYAVAHGMNVLVGTSGWTGERITELERRITGKLAVGVVIIPNFSVGSVLATSFAQMAARFYDSIEIVEAHGASKIDSPSGTAVRTAELMSQARGARGPVQAPHTDQRARGQQVASIPVHSLRMQGVVAKQDVVFGGNGEVLTISHDTLAPSAYEAGILLALRATRTARGVVVGLDRLIDLDGSRERAAQAAAGDAPSGPVDDGGPSGQAATVTSA.

An NAD(+)-binding site is contributed by 9-14 (GATGRM). Lys-37 contacts NADP(+). Residue 75–77 (GTS) coordinates NAD(+). The active-site Proton donor/acceptor is His-132. Lys-136 (proton donor) is an active-site residue. Residue 142–143 (GT) coordinates (S)-2,3,4,5-tetrahydrodipicolinate. Disordered stretches follow at residues 154–173 (ARGA…ARGQ) and 247–277 (ERAA…VTSA). Residues 250-265 (AQAAAGDAPSGPVDDG) show a composition bias toward low complexity.

It belongs to the DapB family.

It is found in the cytoplasm. It catalyses the reaction (S)-2,3,4,5-tetrahydrodipicolinate + NAD(+) + H2O = (2S,4S)-4-hydroxy-2,3,4,5-tetrahydrodipicolinate + NADH + H(+). The catalysed reaction is (S)-2,3,4,5-tetrahydrodipicolinate + NADP(+) + H2O = (2S,4S)-4-hydroxy-2,3,4,5-tetrahydrodipicolinate + NADPH + H(+). It participates in amino-acid biosynthesis; L-lysine biosynthesis via DAP pathway; (S)-tetrahydrodipicolinate from L-aspartate: step 4/4. Functionally, catalyzes the conversion of 4-hydroxy-tetrahydrodipicolinate (HTPA) to tetrahydrodipicolinate. The sequence is that of 4-hydroxy-tetrahydrodipicolinate reductase from Clavibacter michiganensis subsp. michiganensis (strain NCPPB 382).